The primary structure comprises 383 residues: N-acetyldiaminopimelate deacetylase (383 aa).

Asp-72 is a catalytic residue. The active-site Proton acceptor is Glu-131.

Belongs to the peptidase M20A family. N-acetyldiaminopimelate deacetylase subfamily.

It carries out the reaction N-acetyl-(2S,6S)-2,6-diaminopimelate + H2O = (2S,6S)-2,6-diaminopimelate + acetate. It participates in amino-acid biosynthesis; L-lysine biosynthesis via DAP pathway; LL-2,6-diaminopimelate from (S)-tetrahydrodipicolinate (acetylase route): step 3/3. Catalyzes the conversion of N-acetyl-diaminopimelate to diaminopimelate and acetate. This Lacticaseibacillus casei (strain BL23) (Lactobacillus casei) protein is N-acetyldiaminopimelate deacetylase.